Reading from the N-terminus, the 393-residue chain is tRNA(Met) cytidine acetate ligase (393 aa).

Residues glycine 81, asparagine 142, and arginine 167 each contribute to the ATP site.

The protein belongs to the TmcAL family.

Its subcellular location is the cytoplasm. The enzyme catalyses cytidine(34) in elongator tRNA(Met) + acetate + ATP = N(4)-acetylcytidine(34) in elongator tRNA(Met) + AMP + diphosphate. In terms of biological role, catalyzes the formation of N(4)-acetylcytidine (ac(4)C) at the wobble position of elongator tRNA(Met), using acetate and ATP as substrates. First activates an acetate ion to form acetyladenylate (Ac-AMP) and then transfers the acetyl group to tRNA to form ac(4)C34. This is tRNA(Met) cytidine acetate ligase from Bacillus thuringiensis (strain Al Hakam).